The chain runs to 167 residues: Ureidoglycolate lyase (167 aa).

The protein belongs to the ureidoglycolate lyase family. Homodimer. It depends on Ni(2+) as a cofactor.

It carries out the reaction (S)-ureidoglycolate = urea + glyoxylate. It participates in nitrogen metabolism; (S)-allantoin degradation. In terms of biological role, catalyzes the catabolism of the allantoin degradation intermediate (S)-ureidoglycolate, generating urea and glyoxylate. Involved in the utilization of allantoin as nitrogen source. The sequence is that of Ureidoglycolate lyase from Pseudomonas fluorescens (strain Pf0-1).